Here is a 189-residue protein sequence, read N- to C-terminus: Crossover junction endodeoxyribonuclease RuvC (189 aa).

Residues aspartate 12, glutamate 72, and aspartate 147 contribute to the active site. Aspartate 12, glutamate 72, and aspartate 147 together coordinate Mg(2+).

The protein belongs to the RuvC family. Homodimer which binds Holliday junction (HJ) DNA. The HJ becomes 2-fold symmetrical on binding to RuvC with unstacked arms; it has a different conformation from HJ DNA in complex with RuvA. In the full resolvosome a probable DNA-RuvA(4)-RuvB(12)-RuvC(2) complex forms which resolves the HJ. The cofactor is Mg(2+).

It localises to the cytoplasm. The catalysed reaction is Endonucleolytic cleavage at a junction such as a reciprocal single-stranded crossover between two homologous DNA duplexes (Holliday junction).. Its function is as follows. The RuvA-RuvB-RuvC complex processes Holliday junction (HJ) DNA during genetic recombination and DNA repair. Endonuclease that resolves HJ intermediates. Cleaves cruciform DNA by making single-stranded nicks across the HJ at symmetrical positions within the homologous arms, yielding a 5'-phosphate and a 3'-hydroxyl group; requires a central core of homology in the junction. The consensus cleavage sequence is 5'-(A/T)TT(C/G)-3'. Cleavage occurs on the 3'-side of the TT dinucleotide at the point of strand exchange. HJ branch migration catalyzed by RuvA-RuvB allows RuvC to scan DNA until it finds its consensus sequence, where it cleaves and resolves the cruciform DNA. This chain is Crossover junction endodeoxyribonuclease RuvC, found in Porphyromonas gingivalis (strain ATCC BAA-308 / W83).